The chain runs to 223 residues: Deoxyribose-phosphate aldolase (223 aa).

The active-site Proton donor/acceptor is the aspartate 89. The active-site Schiff-base intermediate with acetaldehyde is lysine 152. The active-site Proton donor/acceptor is lysine 181.

This sequence belongs to the DeoC/FbaB aldolase family. DeoC type 1 subfamily.

Its subcellular location is the cytoplasm. The catalysed reaction is 2-deoxy-D-ribose 5-phosphate = D-glyceraldehyde 3-phosphate + acetaldehyde. It participates in carbohydrate degradation; 2-deoxy-D-ribose 1-phosphate degradation; D-glyceraldehyde 3-phosphate and acetaldehyde from 2-deoxy-alpha-D-ribose 1-phosphate: step 2/2. Its function is as follows. Catalyzes a reversible aldol reaction between acetaldehyde and D-glyceraldehyde 3-phosphate to generate 2-deoxy-D-ribose 5-phosphate. The protein is Deoxyribose-phosphate aldolase of Bacillus cereus (strain AH187).